Here is a 453-residue protein sequence, read N- to C-terminus: Nuclear distribution protein PAC1 (453 aa).

Positions 19 to 51 (QKDELHKSILDYFKTNNLHESFATLMREANQEG) constitute a LisH domain. Positions 69–96 (TSVIRLQKKIMEMESRISQLQEELSAAP) form a coiled coil. WD repeat units lie at residues 120–161 (GHRL…RTLK), 162–201 (GHTKAVQDVDFDSKGNYVLSCSSDLSIKVWDANNDYKNIK), 205–244 (GHDHSVSSVRFLPGDDYIVSASRDKTIKIWEFSTGFCTKT), 247–286 (GHAEWVRSAIPSDDAKWLVSCSTDQTARVWDVSSGETKVE), 314–355 (LDPN…KTLT), 356–395 (GHDNWVRGLAFSPNGKSLLSVSDDKTMRLWDLQSGRCTRT), and 413–452 (IEAPIPPAQDGEEAGRKQPEARTVNVVATSSVDLTIKIWT).

The protein belongs to the WD repeat LIS1/nudF family. In terms of assembly, self-associates. Interacts with NDL1 and dynein.

The protein resides in the cytoplasm. Its subcellular location is the cytoskeleton. The protein localises to the spindle pole. Positively regulates the activity of the minus-end directed microtubule motor protein dynein. May enhance dynein-mediated microtubule sliding by targeting dynein to the microtubule plus end. Required for nuclear migration during vegetative growth as well as development. Required for localization of dynein to the mitotic spindle poles. Recruits additional proteins to the dynein complex at SPBs. Required for retrograde early endosome (EE) transport from the hyphal tip. The chain is Nuclear distribution protein PAC1 from Mycosarcoma maydis (Corn smut fungus).